We begin with the raw amino-acid sequence, 240 residues long: Tetraspanin-1 (240 aa).

At 1-9 the chain is on the cytoplasmic side; sequence MQCFSFIKT. Residues 10–30 traverse the membrane as a helical segment; sequence IMILFNLLIFLCGAALLAVGI. Residues 31–52 lie on the Extracellular side of the membrane; the sequence is WVSIDGASFLKIFGPLSSSAMQ. A helical transmembrane segment spans residues 53 to 73; that stretch reads FVNVGYFLIAAGAVVFALGFL. The Cytoplasmic portion of the chain corresponds to 74–88; the sequence is GCYGAQTESKCALMT. Residues 89 to 109 form a helical membrane-spanning segment; sequence FFFILLLIFIAEVAAAVVALV. Residues 110 to 210 are Extracellular-facing; the sequence is YTTMAEHFLT…QQLLYDIRTN (101 aa). The N-linked (GlcNAc...) asparagine glycan is linked to N154. The helical transmembrane segment at 211–231 threads the bilayer; the sequence is AVTVGGVAAGIGGLELAAMIV. The Cytoplasmic portion of the chain corresponds to 232 to 240; the sequence is SMYLYCNLQ.

Belongs to the tetraspanin (TM4SF) family. Interacts with SLC19A2. Interacts with NTRK1/TRKA.

The protein resides in the lysosome membrane. Its function is as follows. Structural component of specialized membrane microdomains known as tetraspanin-enriched microdomains (TERMs), which act as platforms for receptor clustering and signaling. Participates thereby in diverse biological functions such as cell signal transduction, adhesion, migration and protein trafficking. Regulates neuronal differentiation in response to NGF by facilitating NGF-mediated activation of NTRK1/TRKA receptor tyrosine kinase and subsequent downstream signaling pathways. Plays a role in the inhibition of TNFalpha-induced apoptosis. Mechanistically, inhibits the NF-kappa-B signaling pathway by blocking phosphorylation of CHUK. Also promotes the stability of the thiamine transporter 1/SLC19A2 in intestinal epithelial cells leading to an increase of thiamine uptake process. The chain is Tetraspanin-1 (TSPAN1) from Macaca fascicularis (Crab-eating macaque).